A 218-amino-acid polypeptide reads, in one-letter code: 5-oxoprolinase subunit B (218 aa).

This sequence belongs to the PxpB family. As to quaternary structure, forms a complex composed of PxpA, PxpB and PxpC.

It carries out the reaction 5-oxo-L-proline + ATP + 2 H2O = L-glutamate + ADP + phosphate + H(+). Catalyzes the cleavage of 5-oxoproline to form L-glutamate coupled to the hydrolysis of ATP to ADP and inorganic phosphate. The sequence is that of 5-oxoprolinase subunit B from Escherichia coli O157:H7.